The following is a 348-amino-acid chain: Acetylesterase (348 aa).

The first 16 residues, 1-16 (MRSILVIPSFVAVLNA), serve as a signal peptide directing secretion. 5 N-linked (GlcNAc...) asparagine glycosylation sites follow: asparagine 64, asparagine 165, asparagine 218, asparagine 223, and asparagine 297.

Belongs to the carbohydrate esterase CE16 family. Post-translationally, N-glycosylated.

It is found in the secreted. It catalyses the reaction an acetyl ester + H2O = an aliphatic alcohol + acetate + H(+). Functionally, acetylesterase that acts as an exo-deacetylase. Shows activity towards naphtyl acetate, triacetin, as well as towards glucose- and xylose acetates. Liberates acetic acid from xylo-oligomers. The chain is Acetylesterase from Hypocrea jecorina (Trichoderma reesei).